We begin with the raw amino-acid sequence, 86 residues long: Omega-theraphotoxin-Hhn1a 2 (86 aa).

The signal sequence occupies residues 1–21 (MKSIVFVALLGLALLAVVCSA). A propeptide spanning residues 22 to 50 (SEDAHKELLKEVVRAMVVDKTDAVQAEER) is cleaved from the precursor. 3 disulfides stabilise this stretch: C52/C66, C59/C71, and C65/C78.

The protein belongs to the neurotoxin 10 (Hwtx-1) family. 17 (Hntx-9) subfamily. As to expression, expressed by the venom gland.

It is found in the secreted. Ion channel inhibitor. The polypeptide is Omega-theraphotoxin-Hhn1a 2 (Cyriopagopus hainanus (Chinese bird spider)).